The primary structure comprises 272 residues: MLPTILYSAILALSALTPSALAETRSSGCGKHPSLANGVIHLNGREYILKLPDRYDNNHAYHLVFGLHWRGGNMQNVANGESIQPWYGLETRAQGSTIFIAPNGKNAGWANNGGEDVAFIDAIIKQVEADLCVDQSSRFATGFSWGGGMSYSLACSRAKQFKAVSVLSGGVISGCDGGHDPIAYLGIHGINDGVLPFNGGVGLAQKFVQNNGCQQANIGAPPSGSKSSVRTDFKGCSKPVSFIAYDGGHDSAPLGVGSSLAPDATWKFFMAA.

The signal sequence occupies residues 1–22 (MLPTILYSAILALSALTPSALA).

It belongs to the faeC family.

It is found in the secreted. The enzyme catalyses feruloyl-polysaccharide + H2O = ferulate + polysaccharide.. Functionally, involved in degradation of plant cell walls. Hydrolyzes the feruloyl-arabinose ester bond in arabinoxylans, and the feruloyl-galactose ester bond in pectin. Active against paranitrophenyl-acetate, methyl ferulate and wheat arabinoxylan. The protein is Probable feruloyl esterase C (faeC-1) of Aspergillus clavatus (strain ATCC 1007 / CBS 513.65 / DSM 816 / NCTC 3887 / NRRL 1 / QM 1276 / 107).